Reading from the N-terminus, the 95-residue chain is Small ubiquitin-related modifier 2 (95 aa).

Met1 is covalently cross-linked (Peptide (Met-Gly) (interchain with G-Cter in ubiquitin)). Residues Lys5 and Lys7 each participate in a glycyl lysine isopeptide (Lys-Gly) (interchain with G-Cter in SUMO2) cross-link. Lys11 carries the post-translational modification N6-acetyllysine; alternate. Residue Lys11 forms a Glycyl lysine isopeptide (Lys-Gly) (interchain with G-Cter in SUMO); alternate linkage. Residue Lys11 forms a Glycyl lysine isopeptide (Lys-Gly) (interchain with G-Cter in SUMO1); alternate linkage. Residue Lys11 forms a Glycyl lysine isopeptide (Lys-Gly) (interchain with G-Cter in SUMO2); alternate linkage. Lys11 participates in a covalent cross-link: Glycyl lysine isopeptide (Lys-Gly) (interchain with G-Cter in ubiquitin); alternate. Positions Asp16–Tyr95 constitute a Ubiquitin-like domain. Lys21 participates in a covalent cross-link: Glycyl lysine isopeptide (Lys-Gly) (interchain with G-Cter in SUMO2). Gly93 participates in a covalent cross-link: Glycyl lysine isopeptide (Gly-Lys) (interchain with K-? in acceptor proteins). A propeptide spanning residues Val94–Tyr95 is cleaved from the precursor.

The protein belongs to the ubiquitin family. SUMO subfamily. Interacts with SAE2 and UBE2I. Interacts with ZNF451. Identified in a complex with ZNF451 and UBE2I/UBC9, where one ZNF451 interacts with one UBE2I/UBC9 and two SUMO2 chains, one bound to the UBE2I/UBC9 active site and the other to another region of the same UBE2I/UBC9 molecule. Covalently attached to a number of proteins. Interacts with PELP1. Interacts with USP25; the interaction sumoylates USP25. Interacts with SIMC1, CASP8AP2, RNF111 and SOBP (via SIM domains). Interacts with MTA1. Interacts with HINT1. Interacts with GCNA (via SIM domains); this interaction allows the GCNA recruitment to DPCs sites. In terms of processing, polymeric chains can be formed through Lys-11 cross-linking. Polymeric SUMO2 chains undergo 'Lys-6'-, 'Lys-11'-, 'Lys-48'- and 'Lys-63'-linked polyubiquitination by RNF4. Post-translationally, cleavage of precursor form by SENP1 or SENP2 is necessary for function. Monoubiquitinated N-terminally by UBE2W, which primes it for RNF4-dependent polyubiquitination by the UBE2V1-UBE2N heterodimer.

It localises to the nucleus. The protein localises to the PML body. Its function is as follows. Ubiquitin-like protein that can be covalently attached to proteins as a monomer or as a lysine-linked polymer. Covalent attachment via an isopeptide bond to its substrates requires prior activation by the E1 complex SAE1-SAE2 and linkage to the E2 enzyme UBE2I, and can be promoted by an E3 ligase such as PIAS1-4, RANBP2 or CBX4. This post-translational modification on lysine residues of proteins plays a crucial role in a number of cellular processes such as nuclear transport, DNA replication and repair, mitosis and signal transduction. Polymeric SUMO2 chains are also susceptible to polyubiquitination which functions as a signal for proteasomal degradation of modified proteins. Plays a role in the regulation of sumoylation status of SETX. The protein is Small ubiquitin-related modifier 2 of Bos taurus (Bovine).